The sequence spans 118 residues: Small ribosomal subunit protein uS10 (118 aa).

Ser37 is subject to Phosphoserine.

It belongs to the universal ribosomal protein uS10 family. As to quaternary structure, component of the small ribosomal subunit (SSU). Mature yeast ribosomes consist of a small (40S) and a large (60S) subunit. The 40S small subunit contains 1 molecule of ribosomal RNA (18S rRNA) and at least 33 different proteins. The large 60S subunit contains 3 rRNA molecules (25S, 5.8S and 5S rRNA) and at least 46 different proteins.

The protein localises to the cytoplasm. Component of the ribosome, a large ribonucleoprotein complex responsible for the synthesis of proteins in the cell. The small ribosomal subunit (SSU) binds messenger RNAs (mRNAs) and translates the encoded message by selecting cognate aminoacyl-transfer RNA (tRNA) molecules. The large subunit (LSU) contains the ribosomal catalytic site termed the peptidyl transferase center (PTC), which catalyzes the formation of peptide bonds, thereby polymerizing the amino acids delivered by tRNAs into a polypeptide chain. The nascent polypeptides leave the ribosome through a tunnel in the LSU and interact with protein factors that function in enzymatic processing, targeting, and the membrane insertion of nascent chains at the exit of the ribosomal tunnel. This chain is Small ribosomal subunit protein uS10 (rps20), found in Schizosaccharomyces pombe (strain 972 / ATCC 24843) (Fission yeast).